A 244-amino-acid chain; its full sequence is uncharacterized protein (244 aa).

The first 19 residues, 1–19 (MRGIFFLILILNFIGLIFS), serve as a signal peptide directing secretion. N-linked (GlcNAc...) asparagine glycosylation is found at N45 and N77. ShKT domains lie at 67-105 (CNNP…CGKC) and 113-149 (CSDK…CNRC). Disulfide bonds link C113–C149, C122–C142, and C129–C146. Residues N152 and N158 are each glycosylated (N-linked (GlcNAc...) asparagine). ShKT domains lie at 171-205 (CTDL…CNAC) and 208-243 (CEDA…CNIC). 6 cysteine pairs are disulfide-bonded: C171/C205, C178/C198, C185/C202, C208/C243, C215/C236, and C224/C240.

This is an uncharacterized protein from Caenorhabditis elegans.